Reading from the N-terminus, the 331-residue chain is Lipoyl synthase (331 aa).

7 residues coordinate [4Fe-4S] cluster: Cys-57, Cys-62, Cys-68, Cys-83, Cys-87, Cys-90, and Ser-294. The Radical SAM core domain occupies 69–283 (WEDREATFLI…KAEAEAIGFL (215 aa)).

This sequence belongs to the radical SAM superfamily. Lipoyl synthase family. It depends on [4Fe-4S] cluster as a cofactor.

It is found in the cytoplasm. The enzyme catalyses [[Fe-S] cluster scaffold protein carrying a second [4Fe-4S](2+) cluster] + N(6)-octanoyl-L-lysyl-[protein] + 2 oxidized [2Fe-2S]-[ferredoxin] + 2 S-adenosyl-L-methionine + 4 H(+) = [[Fe-S] cluster scaffold protein] + N(6)-[(R)-dihydrolipoyl]-L-lysyl-[protein] + 4 Fe(3+) + 2 hydrogen sulfide + 2 5'-deoxyadenosine + 2 L-methionine + 2 reduced [2Fe-2S]-[ferredoxin]. Its pathway is protein modification; protein lipoylation via endogenous pathway; protein N(6)-(lipoyl)lysine from octanoyl-[acyl-carrier-protein]: step 2/2. Functionally, catalyzes the radical-mediated insertion of two sulfur atoms into the C-6 and C-8 positions of the octanoyl moiety bound to the lipoyl domains of lipoate-dependent enzymes, thereby converting the octanoylated domains into lipoylated derivatives. This chain is Lipoyl synthase, found in Clavibacter michiganensis subsp. michiganensis (strain NCPPB 382).